The primary structure comprises 163 residues: Ubiquitin-like protein 1-ribosomal protein eS31 fusion protein (163 aa).

The Ubiquitin-like domain maps to 1 to 70; sequence MVFVKTLHRT…IYVNLELLGG (70 aa). A Glycyl lysine isopeptide (Gly-Lys) (interchain with K-? in acceptor proteins) cross-link involves residue G70. Residues 115-138 form a C4-type zinc finger; sequence CQQPSCGGGVFMAQHANRHYCGRC.

In the N-terminal section; belongs to the ubiquitin family. This sequence in the C-terminal section; belongs to the eukaryotic ribosomal protein eS31 family.

This Caenorhabditis elegans protein is Ubiquitin-like protein 1-ribosomal protein eS31 fusion protein.